The chain runs to 137 residues: Transcription antitermination protein NusB (137 aa).

Belongs to the NusB family.

In terms of biological role, involved in transcription antitermination. Required for transcription of ribosomal RNA (rRNA) genes. Binds specifically to the boxA antiterminator sequence of the ribosomal RNA (rrn) operons. The protein is Transcription antitermination protein NusB of Aeromonas salmonicida (strain A449).